Consider the following 394-residue polypeptide: QWRF motif-containing protein 7 (394 aa).

A disordered region spans residues 1 to 171; it reads MATTGRRLRP…ESPVSKAKIR (171 aa). Positions 14 to 67 are enriched in low complexity; that stretch reads NNNRSRTISSSISLPVSLNASLSSSTSSSSSSSPSNSSKRVMITRSQSTTRSSR. A compositionally biased stretch (polar residues) spans 85–96; sequence NSASRSQEINNG. Basic and acidic residues predominate over residues 97-110; sequence RSRESFARYLEQRT. Composition is skewed to polar residues over residues 111–120 and 142–157; these read RGSPRSNASS and TMKT…TSMC. The short motif at 211 to 214 is the QWRF motif element; it reads QWRF.

This sequence belongs to the QWRF family.

The chain is QWRF motif-containing protein 7 (QWRF7) from Arabidopsis thaliana (Mouse-ear cress).